The primary structure comprises 188 residues: Elongation factor P (188 aa).

Position 34 is an N6-(3,6-diaminohexanoyl)-5-hydroxylysine (lysine 34).

This sequence belongs to the elongation factor P family. May be beta-lysylated on the epsilon-amino group of Lys-34 by the combined action of EpmA and EpmB, and then hydroxylated on the C5 position of the same residue by EpmC (if this protein is present). Lysylation is critical for the stimulatory effect of EF-P on peptide-bond formation. The lysylation moiety may extend toward the peptidyltransferase center and stabilize the terminal 3-CCA end of the tRNA. Hydroxylation of the C5 position on Lys-34 may allow additional potential stabilizing hydrogen-bond interactions with the P-tRNA.

Its subcellular location is the cytoplasm. Its pathway is protein biosynthesis; polypeptide chain elongation. Functionally, involved in peptide bond synthesis. Alleviates ribosome stalling that occurs when 3 or more consecutive Pro residues or the sequence PPG is present in a protein, possibly by augmenting the peptidyl transferase activity of the ribosome. Modification of Lys-34 is required for alleviation. The chain is Elongation factor P from Enterobacter sp. (strain 638).